Reading from the N-terminus, the 99-residue chain is Integration host factor subunit alpha (99 aa).

The disordered stretch occupies residues 49–71 (FGNFDLRDKNQRPGRNPKTGEDI).

Belongs to the bacterial histone-like protein family. In terms of assembly, heterodimer of an alpha and a beta chain.

Functionally, this protein is one of the two subunits of integration host factor, a specific DNA-binding protein that functions in genetic recombination as well as in transcriptional and translational control. The sequence is that of Integration host factor subunit alpha from Shewanella frigidimarina (strain NCIMB 400).